The primary structure comprises 902 residues: Protein translocase subunit SecA (902 aa).

ATP-binding positions include Gln87, 105 to 109 (GEGKT), and Asp512. The interval 851-902 (LARQQQLSHQAPVEELTQGSAAAAQEGRKVGRNDPCPCGSGKKFKHCHGKLQ) is disordered. Zn(2+) contacts are provided by Cys886, Cys888, Cys897, and His898. Positions 892 to 902 (KKFKHCHGKLQ) are enriched in basic residues.

This sequence belongs to the SecA family. In terms of assembly, monomer and homodimer. Part of the essential Sec protein translocation apparatus which comprises SecA, SecYEG and auxiliary proteins SecDF-YajC and YidC. Zn(2+) serves as cofactor.

The protein resides in the cell inner membrane. It localises to the cytoplasm. The catalysed reaction is ATP + H2O + cellular proteinSide 1 = ADP + phosphate + cellular proteinSide 2.. Functionally, part of the Sec protein translocase complex. Interacts with the SecYEG preprotein conducting channel. Has a central role in coupling the hydrolysis of ATP to the transfer of proteins into and across the cell membrane, serving both as a receptor for the preprotein-SecB complex and as an ATP-driven molecular motor driving the stepwise translocation of polypeptide chains across the membrane. The sequence is that of Protein translocase subunit SecA from Sodalis glossinidius (strain morsitans).